Here is a 209-residue protein sequence, read N- to C-terminus: Ancillary SecYEG translocon subunit (209 aa).

The Cytoplasmic portion of the chain corresponds to 1–23; it reads MAAHLEEQQELDNFKYFWKTTGK. Residues 24 to 42 form a helical membrane-spanning segment; it reads WLFALLILAALGYLGYTVY. Topologically, residues 43 to 209 are periplasmic; sequence QNRAASQNQE…LLQMKLDSLK (167 aa). One copy of the TPR repeat lies at 161-194; it reads PLLMETKGDVYAAQEKSQEALKNYGQALEKMPQD.

It belongs to the YfgM family. In terms of assembly, interacts with the SecYEG translocon. Forms a complex with PpiD.

The protein localises to the cell inner membrane. May mediate protein transfer from the SecYEG translocon to the periplasmic chaperone network via its periplasmic C-terminal region. This Neisseria gonorrhoeae (strain ATCC 700825 / FA 1090) protein is Ancillary SecYEG translocon subunit.